We begin with the raw amino-acid sequence, 733 residues long: Phosphoribosylformylglycinamidine synthase subunit PurL (733 aa).

Residue H41 is part of the active site. The ATP site is built by Y44 and K83. E85 serves as a coordination point for Mg(2+). Substrate contacts are provided by residues 86-89 (SHNH) and R108. H87 (proton acceptor) is an active-site residue. D109 is a binding site for Mg(2+). The disordered stretch occupies residues 212-232 (GASFASQELSEESEEKRPSVQ). Q232 contacts substrate. A Mg(2+)-binding site is contributed by D260. 304 to 306 (ESQ) is a binding site for substrate. 2 residues coordinate ATP: D488 and G525. N526 provides a ligand contact to Mg(2+). S528 lines the substrate pocket.

Belongs to the FGAMS family. Monomer. Part of the FGAM synthase complex composed of 1 PurL, 1 PurQ and 2 PurS subunits.

It is found in the cytoplasm. It catalyses the reaction N(2)-formyl-N(1)-(5-phospho-beta-D-ribosyl)glycinamide + L-glutamine + ATP + H2O = 2-formamido-N(1)-(5-O-phospho-beta-D-ribosyl)acetamidine + L-glutamate + ADP + phosphate + H(+). It participates in purine metabolism; IMP biosynthesis via de novo pathway; 5-amino-1-(5-phospho-D-ribosyl)imidazole from N(2)-formyl-N(1)-(5-phospho-D-ribosyl)glycinamide: step 1/2. Functionally, part of the phosphoribosylformylglycinamidine synthase complex involved in the purines biosynthetic pathway. Catalyzes the ATP-dependent conversion of formylglycinamide ribonucleotide (FGAR) and glutamine to yield formylglycinamidine ribonucleotide (FGAM) and glutamate. The FGAM synthase complex is composed of three subunits. PurQ produces an ammonia molecule by converting glutamine to glutamate. PurL transfers the ammonia molecule to FGAR to form FGAM in an ATP-dependent manner. PurS interacts with PurQ and PurL and is thought to assist in the transfer of the ammonia molecule from PurQ to PurL. The protein is Phosphoribosylformylglycinamidine synthase subunit PurL of Thermoanaerobacter pseudethanolicus (strain ATCC 33223 / 39E) (Clostridium thermohydrosulfuricum).